The primary structure comprises 416 residues: Tyrosine--tRNA ligase (416 aa).

Tyrosine 41 provides a ligand contact to L-tyrosine. A 'HIGH' region motif is present at residues 46–55 (ATASSLHAGH). Positions 175 and 179 each coordinate L-tyrosine. The 'KMSKS' region signature appears at 235 to 239 (KMGKT). Lysine 238 contributes to the ATP binding site. Residues 349–416 (LPVAKAFVDA…KKKHVLLKPV (68 aa)) enclose the S4 RNA-binding domain.

This sequence belongs to the class-I aminoacyl-tRNA synthetase family. TyrS type 1 subfamily. In terms of assembly, homodimer.

Its subcellular location is the cytoplasm. The enzyme catalyses tRNA(Tyr) + L-tyrosine + ATP = L-tyrosyl-tRNA(Tyr) + AMP + diphosphate + H(+). Its function is as follows. Catalyzes the attachment of tyrosine to tRNA(Tyr) in a two-step reaction: tyrosine is first activated by ATP to form Tyr-AMP and then transferred to the acceptor end of tRNA(Tyr). The sequence is that of Tyrosine--tRNA ligase from Xanthobacter autotrophicus (strain ATCC BAA-1158 / Py2).